A 312-amino-acid chain; its full sequence is Pectin lyase (312 aa).

Arginine 201 is an active-site residue. The segment at 254–274 is disordered; sequence GSGTFTDTNSVPPITNQKSPK. A compositionally biased stretch (polar residues) spans 256–274; the sequence is GTFTDTNSVPPITNQKSPK.

Belongs to the polysaccharide lyase 1 family.

It carries out the reaction Eliminative cleavage of (1-&gt;4)-alpha-D-galacturonan methyl ester to give oligosaccharides with 4-deoxy-6-O-methyl-alpha-D-galact-4-enuronosyl groups at their non-reducing ends.. This chain is Pectin lyase (pnl), found in Pseudomonas marginalis (Pseudomonas panacis).